A 321-amino-acid polypeptide reads, in one-letter code: HPr kinase/phosphorylase (321 aa).

Residues histidine 143 and lysine 164 contribute to the active site. Residue 158–165 (GKSGVGKS) coordinates ATP. A Mg(2+)-binding site is contributed by serine 165. Aspartate 182 serves as the catalytic Proton acceptor; for phosphorylation activity. Proton donor; for dephosphorylation activity. The segment at 206–215 (MEIRGLGILN) is important for the catalytic mechanism of both phosphorylation and dephosphorylation. Glutamate 207 is a binding site for Mg(2+). Arginine 248 is a catalytic residue. The interval 269-274 (PVRPGR) is important for the catalytic mechanism of dephosphorylation.

It belongs to the HPrK/P family. In terms of assembly, homohexamer. Mg(2+) is required as a cofactor.

It catalyses the reaction [HPr protein]-L-serine + ATP = [HPr protein]-O-phospho-L-serine + ADP + H(+). The catalysed reaction is [HPr protein]-O-phospho-L-serine + phosphate + H(+) = [HPr protein]-L-serine + diphosphate. Catalyzes the ATP- as well as the pyrophosphate-dependent phosphorylation of a specific serine residue in HPr, a phosphocarrier protein of the phosphoenolpyruvate-dependent sugar phosphotransferase system (PTS). HprK/P also catalyzes the pyrophosphate-producing, inorganic phosphate-dependent dephosphorylation (phosphorolysis) of seryl-phosphorylated HPr (P-Ser-HPr). The sequence is that of HPr kinase/phosphorylase from Leptospira interrogans serogroup Icterohaemorrhagiae serovar copenhageni (strain Fiocruz L1-130).